Reading from the N-terminus, the 424-residue chain is Serine--tRNA ligase (424 aa).

232 to 234 (TAE) serves as a coordination point for L-serine. ATP is bound at residue 263 to 265 (RRE). Residue E286 coordinates L-serine. 350–353 (EISS) provides a ligand contact to ATP. S384 is a binding site for L-serine.

It belongs to the class-II aminoacyl-tRNA synthetase family. Type-1 seryl-tRNA synthetase subfamily. As to quaternary structure, homodimer. The tRNA molecule binds across the dimer.

Its subcellular location is the cytoplasm. The catalysed reaction is tRNA(Ser) + L-serine + ATP = L-seryl-tRNA(Ser) + AMP + diphosphate + H(+). It carries out the reaction tRNA(Sec) + L-serine + ATP = L-seryl-tRNA(Sec) + AMP + diphosphate + H(+). It functions in the pathway aminoacyl-tRNA biosynthesis; selenocysteinyl-tRNA(Sec) biosynthesis; L-seryl-tRNA(Sec) from L-serine and tRNA(Sec): step 1/1. Its function is as follows. Catalyzes the attachment of serine to tRNA(Ser). Is also able to aminoacylate tRNA(Sec) with serine, to form the misacylated tRNA L-seryl-tRNA(Sec), which will be further converted into selenocysteinyl-tRNA(Sec). The sequence is that of Serine--tRNA ligase from Prochlorococcus marinus subsp. pastoris (strain CCMP1986 / NIES-2087 / MED4).